The chain runs to 273 residues: NH(3)-dependent NAD(+) synthetase (273 aa).

47-54 (GISGGQDS) is a binding site for ATP. Residue Asp53 participates in Mg(2+) binding. Residue Arg139 participates in deamido-NAD(+) binding. Position 159 (Thr159) interacts with ATP. Glu164 contacts Mg(2+). Deamido-NAD(+)-binding residues include Lys172 and Asp179. ATP is bound by residues Lys188 and Thr210. 259 to 260 (HK) contacts deamido-NAD(+).

This sequence belongs to the NAD synthetase family. As to quaternary structure, homodimer.

It catalyses the reaction deamido-NAD(+) + NH4(+) + ATP = AMP + diphosphate + NAD(+) + H(+). It functions in the pathway cofactor biosynthesis; NAD(+) biosynthesis; NAD(+) from deamido-NAD(+) (ammonia route): step 1/1. Catalyzes the ATP-dependent amidation of deamido-NAD to form NAD. Uses ammonia as a nitrogen source. This chain is NH(3)-dependent NAD(+) synthetase, found in Staphylococcus aureus (strain N315).